The sequence spans 182 residues: Acireductone dioxygenase (182 aa).

Fe(2+) is bound by residues histidine 100, histidine 102, glutamate 106, and histidine 145. Ni(2+)-binding residues include histidine 100, histidine 102, glutamate 106, and histidine 145.

The protein belongs to the acireductone dioxygenase (ARD) family. In terms of assembly, monomer. Fe(2+) is required as a cofactor. The cofactor is Ni(2+).

The enzyme catalyses 1,2-dihydroxy-5-(methylsulfanyl)pent-1-en-3-one + O2 = 3-(methylsulfanyl)propanoate + CO + formate + 2 H(+). The catalysed reaction is 1,2-dihydroxy-5-(methylsulfanyl)pent-1-en-3-one + O2 = 4-methylsulfanyl-2-oxobutanoate + formate + 2 H(+). It participates in amino-acid biosynthesis; L-methionine biosynthesis via salvage pathway; L-methionine from S-methyl-5-thio-alpha-D-ribose 1-phosphate: step 5/6. Its function is as follows. Catalyzes 2 different reactions between oxygen and the acireductone 1,2-dihydroxy-3-keto-5-methylthiopentene (DHK-MTPene) depending upon the metal bound in the active site. Fe-containing acireductone dioxygenase (Fe-ARD) produces formate and 2-keto-4-methylthiobutyrate (KMTB), the alpha-ketoacid precursor of methionine in the methionine recycle pathway. Ni-containing acireductone dioxygenase (Ni-ARD) produces methylthiopropionate, carbon monoxide and formate, and does not lie on the methionine recycle pathway. This is Acireductone dioxygenase from Trichormus variabilis (strain ATCC 29413 / PCC 7937) (Anabaena variabilis).